The primary structure comprises 398 residues: Leucine aminopeptidase 1 (398 aa).

An N-terminal signal peptide occupies residues 1–20 (MKFLQTSLIAAALPAALVSG). Positions 21–87 (RFVIENEGDN…LRAWTQSQAS (67 aa)) are excised as a propeptide. N-linked (GlcNAc...) asparagine glycosylation occurs at Asn179. Zn(2+)-binding residues include His187, Asp206, Glu245, and Asp272. A disulfide bridge links Cys321 with Cys325. A Zn(2+)-binding site is contributed by His354.

This sequence belongs to the peptidase M28 family. M28E subfamily. In terms of assembly, monomer. It depends on Zn(2+) as a cofactor.

The protein resides in the secreted. Extracellular aminopeptidase that allows assimilation of proteinaceous substrates. In Trichoderma harzianum (Hypocrea lixii), this protein is Leucine aminopeptidase 1 (lap1).